The following is a 629-amino-acid chain: tRNA uridine 5-carboxymethylaminomethyl modification enzyme MnmG (629 aa).

FAD contacts are provided by residues 13–18, Val-125, and Ser-180; that span reads GGGHAG. Position 273–287 (273–287) interacts with NAD(+); the sequence is GPRYCPSIEDKVMRF. Gln-370 contacts FAD.

It belongs to the MnmG family. In terms of assembly, homodimer. Heterotetramer of two MnmE and two MnmG subunits. Requires FAD as cofactor.

The protein resides in the cytoplasm. Its function is as follows. NAD-binding protein involved in the addition of a carboxymethylaminomethyl (cmnm) group at the wobble position (U34) of certain tRNAs, forming tRNA-cmnm(5)s(2)U34. In Salmonella typhi, this protein is tRNA uridine 5-carboxymethylaminomethyl modification enzyme MnmG.